We begin with the raw amino-acid sequence, 283 residues long: Pantothenate synthetase (283 aa).

Position 30-37 (Met30–His37) interacts with ATP. His37 functions as the Proton donor in the catalytic mechanism. Gln61 serves as a coordination point for (R)-pantoate. A beta-alanine-binding site is contributed by Gln61. Residue Gly149–Asp152 coordinates ATP. Gln155 serves as a coordination point for (R)-pantoate. Residues Val178 and Leu186–Arg189 contribute to the ATP site.

This sequence belongs to the pantothenate synthetase family. In terms of assembly, homodimer.

The protein resides in the cytoplasm. The enzyme catalyses (R)-pantoate + beta-alanine + ATP = (R)-pantothenate + AMP + diphosphate + H(+). It functions in the pathway cofactor biosynthesis; (R)-pantothenate biosynthesis; (R)-pantothenate from (R)-pantoate and beta-alanine: step 1/1. In terms of biological role, catalyzes the condensation of pantoate with beta-alanine in an ATP-dependent reaction via a pantoyl-adenylate intermediate. This chain is Pantothenate synthetase, found in Hydrogenovibrio crunogenus (strain DSM 25203 / XCL-2) (Thiomicrospira crunogena).